The following is a 216-amino-acid chain: DNA gyrase subunit B (216 aa).

The 77-residue stretch at 140 to 216 folds into the Toprim domain; sequence SELYLVEGDS…PDKLRYHKII (77 aa).

It belongs to the type II topoisomerase GyrB family. Heterotetramer, composed of two GyrA and two GyrB chains. In the heterotetramer, GyrA contains the active site tyrosine that forms a transient covalent intermediate with DNA, while GyrB binds cofactors and catalyzes ATP hydrolysis.

Its subcellular location is the cytoplasm. It catalyses the reaction ATP-dependent breakage, passage and rejoining of double-stranded DNA.. Functionally, a type II topoisomerase that negatively supercoils closed circular double-stranded (ds) DNA in an ATP-dependent manner to modulate DNA topology and maintain chromosomes in an underwound state. Negative supercoiling favors strand separation, and DNA replication, transcription, recombination and repair, all of which involve strand separation. Also able to catalyze the interconversion of other topological isomers of dsDNA rings, including catenanes and knotted rings. Type II topoisomerases break and join 2 DNA strands simultaneously in an ATP-dependent manner. This chain is DNA gyrase subunit B (gyrB), found in Acinetobacter sp. (strain ATCC 33308 / BD413 ErpE27).